Reading from the N-terminus, the 239-residue chain is UPF0126 membrane protein VC_2382 (239 aa).

A run of 6 helical transmembrane segments spans residues 38–58 (LLYL…VLLA), 62–82 (KMDP…GGTI), 86–106 (ALGA…VIMI), 122–142 (AWWI…GIGV), 153–173 (LIAI…RDVL), and 185–205 (VYAT…AMGY).

Belongs to the UPF0126 family.

Its subcellular location is the cell membrane. This chain is UPF0126 membrane protein VC_2382, found in Vibrio cholerae serotype O1 (strain ATCC 39315 / El Tor Inaba N16961).